A 207-amino-acid polypeptide reads, in one-letter code: MPKVIGLTGGIASGKSTVSELLSVFGFKVVDADKAAREAVKKGSKGLAQVREVFGDEAIDENGEMNRRYMGDLVFNHPEKRLELNAIIHPIVRDIMEEEKQEYLKQGYNVIMDIPLLFENELENTVDEVWVIYTSESIQMDRLMQRNNLSLEDAKARVYSQISIDKKSRMADHVIDNLGDKLELKQNLERLLKEEGYIEKPNYGEED.

Residues Val4–Tyr203 form the DPCK domain. Ala12–Thr17 is an ATP binding site.

The protein belongs to the CoaE family.

Its subcellular location is the cytoplasm. The enzyme catalyses 3'-dephospho-CoA + ATP = ADP + CoA + H(+). It participates in cofactor biosynthesis; coenzyme A biosynthesis; CoA from (R)-pantothenate: step 5/5. Functionally, catalyzes the phosphorylation of the 3'-hydroxyl group of dephosphocoenzyme A to form coenzyme A. This is Dephospho-CoA kinase from Staphylococcus aureus (strain bovine RF122 / ET3-1).